We begin with the raw amino-acid sequence, 501 residues long: MTEQTQDENKLIAERRAKLEHIRTNCPANGHPNNFDRKHKAADIQAEFGHNTKEELEGMGIERSIAGRVMAKRGPFLVIQDVSGRIQAYAGKDVQKDLKEKFLGLDIGDIIGVTGQLHLSGKGDLYVNMEEYQLLTKALRPLPEKFHGLTDQETRYRQRYVDLIVNEDSREAFIMRSKVVSAIRNFMVKKEFMEVETPMMHSIPGGASARPFETHHNALDIAMYLRIAPELYLKRLVVGGFERVFEINRNFRNEGLSPRHNPEFTMMEFYMAYADFNDLMDLTEEMLSSIATELCGSPQLPYGEHTVDFGGPYARLSMLDAIKKYNPDNATIQSMTYEEVKDVEFMRDLAKSLGMTVEKFWTCGQLLEEIFGETAETQLMQPTFITGYPADISPLARRNDDNHFITDRFEFFIGGREVANGFSELNDAEDQDSRFKAQVDAKDAGDDEAMFYDADYITALEHGLPPTAGQGIGIDRLVMLFTNTHTIRDVILFPAMRPQAN.

The Mg(2+) site is built by E410 and E417.

The protein belongs to the class-II aminoacyl-tRNA synthetase family. Homodimer. Mg(2+) serves as cofactor.

The protein resides in the cytoplasm. The enzyme catalyses tRNA(Lys) + L-lysine + ATP = L-lysyl-tRNA(Lys) + AMP + diphosphate. In Shewanella pealeana (strain ATCC 700345 / ANG-SQ1), this protein is Lysine--tRNA ligase.